Consider the following 402-residue polypeptide: Speedy protein E21 (402 aa).

The segment at 1–90 (MDRTETRFRK…EPEKELAPEP (90 aa)) is disordered. Residues 16 to 39 (GKITTSRQLHPQNEQSPQRSTSGY) show a composition bias toward polar residues. Residues 76–90 (DESEEEPEKELAPEP) show a composition bias toward acidic residues.

It belongs to the Speedy/Ringo family.

The sequence is that of Speedy protein E21 from Homo sapiens (Human).